A 216-amino-acid polypeptide reads, in one-letter code: Uracil phosphoribosyltransferase (216 aa).

Residues Arg85, Arg110, and 135 to 143 (DPMVATGYS) each bind 5-phospho-alpha-D-ribose 1-diphosphate. Uracil contacts are provided by residues Ile200 and 205-207 (GDA). Asp206 provides a ligand contact to 5-phospho-alpha-D-ribose 1-diphosphate.

This sequence belongs to the UPRTase family. It depends on Mg(2+) as a cofactor.

The catalysed reaction is UMP + diphosphate = 5-phospho-alpha-D-ribose 1-diphosphate + uracil. The protein operates within pyrimidine metabolism; UMP biosynthesis via salvage pathway; UMP from uracil: step 1/1. Allosterically activated by GTP. Catalyzes the conversion of uracil and 5-phospho-alpha-D-ribose 1-diphosphate (PRPP) to UMP and diphosphate. The chain is Uracil phosphoribosyltransferase from Paraburkholderia phymatum (strain DSM 17167 / CIP 108236 / LMG 21445 / STM815) (Burkholderia phymatum).